The sequence spans 1020 residues: MANLTRRQWLKVGLAVGGMVTFGLSYRDVAKRAIDGLLNGTSGKVTRDRIFGNALIPEAQAQTHWQQNPQQTIAMTQCFGCWTQCGIRARVNADGKVIRIAGNPYHPLSQEHPIDSSVPFSEAMEQLAGESGLDARSTACARGATLLESLYSPLRLLEPMKRVGKRGEGKWQRISFEQLIEEVVEGGDLFGEGHVDGLRAIHAPDTPIDAKHPSFGPKTNQLLVTNTSDEGRDAFLRRFALNSFGSKNFGAHGAYCGLAYRAGSGALMGDLDKNPHVKPDWENVEFALFMGTSPAQSGNPFKRQARQLASARLRENFQYVVVAPALPLSTVLADPRGRWQPVMPGSDSALAMGMIRWIMDNQRYNADYLAIPGVQAMQQAGEQSWTNATHLVIADELPTLAGQHLTLRHLTPDGEETPVVLNTDGELVDASTCRQARLFVTQYVTLADGQRVTVKSGLQRLKEAAEKLSLAQYSEQCGVPEAQIIALAETFTSHGRKAAVISHGGMMAGNGFYNAWSVMMLNALIGNLSLSGGVFVGGGKFNGVSDGPRYNMNSFAGKVKPSGLSIARSKTAYEASEEYRDKIAGGQSPYPAKAPWYPFVAGQLTELLTSALEGYPYPLKAWISNMSNPFYGVPGLRAVAEEKLKDPRRLPLFIAIDAFMNETTALADYIVPDTHNFESWGFTAPWGGVASKATTARWPVVAPATHRTADGQPVSMEAFCIAVAKRLHLPGFGDRAITDPQGNTFPLNRAEDFYLRVAANIAFMGKTPVALANQEDISLTGVSRILPAIQHTLKADEVGRVAFIYSRGGRFAPEDSGYTEQRLGNAWKKPLQIWNADVAAHRHAITGERFSGCPVWYPARLSDGRAIDDQFPIGQWPLKLISFKSNTMSSSTAVIPRLHHVKPANLVALNPQDGERYGLQHGDRVRIITPGGQVVAQISLLNGVMPGVIAIEHGYGHREMGATQHSLDGVPMPYDPQIRAGINLNDLGFADPTRTITNTWLDWVSGAAVRQGLPAKIERI.

The segment at residues 1–33 (MANLTRRQWLKVGLAVGGMVTFGLSYRDVAKRA) is a signal peptide (tat-type signal). Residues 71 to 154 (QTIAMTQCFG…TLLESLYSPL (84 aa)) form the 4Fe-4S Mo/W bis-MGD-type domain. The [4Fe-4S] cluster site is built by cysteine 78, cysteine 81, cysteine 85, and cysteine 140.

The protein belongs to the prokaryotic molybdopterin-containing oxidoreductase family. In terms of assembly, probably composed of three subunits: TtrA, TtrB and TtrC. The cofactor is [4Fe-4S] cluster. Mo-bis(molybdopterin guanine dinucleotide) serves as cofactor. In terms of processing, predicted to be exported by the Tat system. The position of the signal peptide cleavage has not been experimentally proven.

It is found in the periplasm. The protein resides in the cell inner membrane. Its function is as follows. Part of a membrane-bound tetrathionate reductase that catalyzes the reduction of tetrathionate to thiosulfate. TtrA is the catalytic subunit. During mice infection, the ability to use tetrathionate as an electron acceptor is a growth advantage for S.typhimurium over the competing microbiota in the lumen of the inflamed gut. The chain is Tetrathionate reductase subunit A (ttrA) from Salmonella typhimurium (strain LT2 / SGSC1412 / ATCC 700720).